The chain runs to 352 residues: Glycogen synthase kinase 3 (352 aa).

The region spanning 20-310 (YTVERVAGQG…PLDALCHPFF (291 aa)) is the Protein kinase domain. ATP-binding positions include 26–34 (AGQGTFGTV) and lysine 49. Residue aspartate 152 is the Proton acceptor of the active site.

Belongs to the protein kinase superfamily. CMGC Ser/Thr protein kinase family. GSK-3 subfamily. As to quaternary structure, inhibited by cyclin kinase 2 (CDK2) inhibitors, including GW8510.

It catalyses the reaction L-seryl-[tau protein] + ATP = O-phospho-L-seryl-[tau protein] + ADP + H(+). The enzyme catalyses L-threonyl-[tau protein] + ATP = O-phospho-L-threonyl-[tau protein] + ADP + H(+). This chain is Glycogen synthase kinase 3, found in Trypanosoma brucei brucei (strain 927/4 GUTat10.1).